A 156-amino-acid polypeptide reads, in one-letter code: UPF0039 protein Mb2876c (156 aa).

The N-acetyltransferase domain maps to 8 to 150; it reads VWAKDLDARA…PHVPMLRPGS (143 aa).

The protein belongs to the UPF0039 (ElaA) family.

The polypeptide is UPF0039 protein Mb2876c (Mycobacterium bovis (strain ATCC BAA-935 / AF2122/97)).